The following is a 545-amino-acid chain: Autoimmune regulator (545 aa).

Residues 1 to 105 (MATDAALRRL…ILDSFPKDVD (105 aa)) enclose the HSR domain. 2 short sequence motifs (LXXLL motif) span residues 7 to 11 (LRRLL) and 63 to 67 (LSWLL). 2 disordered regions span residues 101–178 (PKDV…LPLG) and 234–290 (SKFE…SDPQ). The segment covering 116-128 (PAVPKALVPPPRL) has biased composition (pro residues). The segment covering 140 to 152 (AAAPAALTPRGTA) has biased composition (low complexity). Residues 181 to 280 (IQTMSASVQR…ARLGQQGSVP (100 aa)) enclose the SAND domain. Interaction with histone H3 not methylated at 'Lys-4' stretches follow at residues 295-298 (NEDE), 304-312 (DGGELICCD), and 331-335 (PSGTW). A PHD-type 1 zinc finger spans residues 296–343 (EDECAVCRDGGELICCDGCPRAFHLACLSPPLREIPSGTWRCSSCLQA). The interval 348-382 (VQPRAEEPRPQEPPVETPLPPGLRSAGEEVRGPPG) is disordered. Over residues 358 to 368 (QEPPVETPLPP) the composition is skewed to pro residues. An LXXLL motif 3 motif is present at residues 414–418 (LHPLL). The PHD-type 2 zinc-finger motif lies at 434 to 475 (CGVCGDGTDVLRCTHCAAAFHWRCHFPAGTSRPGTGLRCRSC). The interval 489-508 (APSPARLAPGPAKDDTASHE) is disordered. Positions 516-520 (LESLL) match the LXXLL motif 4 motif.

In terms of assembly, homodimer and homotetramer. Interacts with CREBBP. Interacts preferentially with histone H3 that is not methylated at 'Lys-4'. Binds with lower affinity to histone H3 that is monomethylated at 'Lys-4'. Trimethylation of histone H3 at 'Lys-4' or phosphorylation at 'Thr-3' abolish the interaction. Binds with lower affinity to histone H3 that is acetylated at 'Lys-4', or that is acetylated at 'Lys-9' or trimethylated at 'Lys-9'. Binds histone H3 that is dimethylated at 'Arg-2' with very low affinity. In terms of processing, phosphorylated. Phosphorylation could trigger oligomerization. As to expression, widely expressed. Expressed at higher level in thymus (medullary epithelial cells and monocyte-dendritic cells), pancreas, adrenal cortex and testis. Expressed at lower level in the spleen, fetal liver and lymph nodes. In secondary lymphoid organs, expressed in a discrete population of bone marrow-derived toleregenic antigen presenting cells (APCs) called extrathymic AIRE expressing cells (eTAC)(at protein level). Isoform 2 and isoform 3 seem to be less frequently expressed than isoform 1, if at all.

It localises to the nucleus. It is found in the cytoplasm. In terms of biological role, transcription factor playing an essential role to promote self-tolerance in the thymus by regulating the expression of a wide array of self-antigens that have the commonality of being tissue-restricted in their expression pattern in the periphery, called tissue restricted antigens (TRA). Binds to G-doublets in an A/T-rich environment; the preferred motif is a tandem repeat of 5'-ATTGGTTA-3' combined with a 5'-TTATTA-3' box. Binds to nucleosomes. Binds to chromatin and interacts selectively with histone H3 that is not methylated at 'Lys-4', not phosphorylated at 'Thr-3' and not methylated at 'Arg-2'. Functions as a sensor of histone H3 modifications that are important for the epigenetic regulation of gene expression. Mainly expressed by medullary thymic epithelial cells (mTECs), induces the expression of thousands of tissue-restricted proteins, which are presented on major histocompatibility complex class I (MHC-I) and MHC-II molecules to developing T-cells percolating through the thymic medulla. Also induces self-tolerance through other mechanisms such as the regulation of the mTEC differentiation program. Controls the medullary accumulation of thymic dendritic cells and the development of regulatory T-cell through the regulation of XCL1 expression. Regulates the production of CCR4 and CCR7 ligands in medullary thymic epithelial cells and alters the coordinated maturation and migration of thymocytes. In thimic B-cells, allows the presentation of licensing-dependent endogenous self-anitgen for negative selection. In secondary lymphoid organs, induces functional inactivation of CD4(+) T-cells. Expressed by a distinct bone marrow-derived population, induces self-tolerance through a mechanism that does not require regulatory T-cells and is resitant to innate inflammatory stimuli. The sequence is that of Autoimmune regulator (AIRE) from Homo sapiens (Human).